A 560-amino-acid chain; its full sequence is Putative ABC transporter ATP-binding protein SP_0483 (560 aa).

2 consecutive ABC transporter domains span residues 6 to 247 (IEWK…GIRE) and 297 to 528 (FRLE…ANLK). ATP is bound by residues 40–47 (GPSGSGKS) and 329–336 (GKNGAGKS).

The protein belongs to the ABC transporter superfamily.

It localises to the cell membrane. Functionally, probably part of an ABC transporter complex. Responsible for energy coupling to the transport system. In Streptococcus pneumoniae serotype 4 (strain ATCC BAA-334 / TIGR4), this protein is Putative ABC transporter ATP-binding protein SP_0483.